We begin with the raw amino-acid sequence, 439 residues long: Divalent metal cation transporter MntH 1 (439 aa).

9 helical membrane passes run 64-84 (FGYA…LLQS), 139-161 (LLGV…VLAL), 171-191 (AIVL…LVLI), 214-234 (PLYL…LYLH), 262-282 (IGSL…AAAA), 300-320 (LLDP…ALLA), 359-379 (LVPA…KLLV), 380-400 (LSQV…IRFS), and 418-438 (LAWS…YFWF).

Belongs to the NRAMP family.

Its subcellular location is the cell inner membrane. Its function is as follows. H(+)-stimulated, divalent metal cation uptake system. The sequence is that of Divalent metal cation transporter MntH 1 from Pseudomonas aeruginosa (strain ATCC 15692 / DSM 22644 / CIP 104116 / JCM 14847 / LMG 12228 / 1C / PRS 101 / PAO1).